The sequence spans 153 residues: Endoribonuclease YbeY (153 aa).

Residues histidine 118, histidine 122, and histidine 128 each coordinate Zn(2+).

This sequence belongs to the endoribonuclease YbeY family. Zn(2+) is required as a cofactor.

The protein resides in the cytoplasm. Its function is as follows. Single strand-specific metallo-endoribonuclease involved in late-stage 70S ribosome quality control and in maturation of the 3' terminus of the 16S rRNA. The sequence is that of Endoribonuclease YbeY from Clostridioides difficile (strain 630) (Peptoclostridium difficile).